Reading from the N-terminus, the 405-residue chain is Glycosylated lysosomal membrane protein A (405 aa).

The first 25 residues, 1-25 (MGCTRGWRLLLLLGLVCVGALQGRG), serve as a signal peptide directing secretion. Topologically, residues 26 to 365 (QEESREVSLQ…YGEPPRDSFS (340 aa)) are lumenal. N-linked (GlcNAc...) asparagine glycans are attached at residues asparagine 55, asparagine 86, asparagine 125, asparagine 129, asparagine 143, asparagine 153, asparagine 157, asparagine 164, asparagine 169, asparagine 179, asparagine 206, asparagine 222, asparagine 267, asparagine 304, and asparagine 331. A helical transmembrane segment spans residues 366–386 (ILVICIMAVALGTPLLLLIVG). The Cytoplasmic portion of the chain corresponds to 387 to 405 (TLVVTALRHKVYSNYEPIN). Residues 401-405 (YEPIN) carry the Lysosomal targeting motif motif.

It belongs to the GLMP family. As to quaternary structure, interacts (via lumenal domain) with lysosomal protein MFSD1; the interaction starts while both proteins are still in the endoplasmic reticulum and is required for stabilization of MFSD1 in lysosomes but has no direct effect on its targeting to lysosomes or transporter activity.

The protein localises to the lysosome membrane. In terms of biological role, required to protect lysosomal transporter MFSD1 from lysosomal proteolysis and for MFSD1 lysosomal localization. In Xenopus laevis (African clawed frog), this protein is Glycosylated lysosomal membrane protein A (glmp-a).